Here is a 249-residue protein sequence, read N- to C-terminus: Transmembrane protein 150C (249 aa).

The Cytoplasmic segment spans residues Met1–Trp9. A helical membrane pass occupies residues Met10–Ile30. Residues Ala31–Ala64 lie on the Extracellular side of the membrane. The chain crosses the membrane as a helical span at residues Ser65–Leu85. Over Arg86 to Pro97 the chain is Cytoplasmic. The helical transmembrane segment at Trp98–Gly118 threads the bilayer. Topologically, residues Asn119–Asn130 are extracellular. The chain crosses the membrane as a helical span at residues Val131–Thr151. The Cytoplasmic portion of the chain corresponds to Leu152–Val168. Residues Ile169 to Ile189 traverse the membrane as a helical segment. Residues His190–Tyr192 lie on the Extracellular side of the membrane. A helical membrane pass occupies residues Ala193–Val213. The Cytoplasmic segment spans residues Glu214–Val249.

The protein belongs to the DRAM/TMEM150 family.

The protein resides in the cell membrane. Its subcellular location is the lysosome membrane. It carries out the reaction Ca(2+)(in) = Ca(2+)(out). The catalysed reaction is Na(+)(in) = Na(+)(out). The enzyme catalyses K(+)(in) = K(+)(out). It catalyses the reaction Mg(2+)(in) = Mg(2+)(out). Nonselective cationic channel with high permeability to Ca(2+). Component of a mechanosensitive cation channel. Confers mechanically activated (MA) currents with slow inactivation kinetics. May contribute to proprioception. This chain is Transmembrane protein 150C (TMEM150C), found in Bos taurus (Bovine).